Reading from the N-terminus, the 496-residue chain is MEKSQGYLELDKSWRHNFLYPLIFQEYIYALAHEQGLNRSILLENTDHDNKYSSLIVKRLITLIHQQNHFLIFDNDSNQNPFWKHNNNLYSQTISEGFVIIVEIPFSPRFVDSLEEKKKILKSNNLRSIHSIFPFLEDQILHLNFVANILIPYPIHLEIVVQSLRYRVKDASSLHLLRFFLFTLNKSISSFSKRNQRFFLFLYNSHVYEYESTFLFLRNKTSHLRSTSSGAFLERIFFYGKIKHLIEVFANDFQAILWLFKDPFMHYVRYQGKSILASKRTSLRMNKWKYYLVNFWQCQFYVWSQPGRVSINQLSNHSLDFLGYLSSVRRNPLAVRSQMLENSFLTDNAIKKFDIIVLLISLIGSLAKAKFCNVLGHPLSKPARADSSDSDIIERFVRICRNLSHYHSGSSKKKSLYRIKYILRLSCARTLARKHKTTVRSFLKRLGSELLEEFLTEDGQVISLIFPRTSSTSWRLYRGGIWYLDITCINDLANHE.

This sequence belongs to the intron maturase 2 family. MatK subfamily.

The protein resides in the plastid. It is found in the chloroplast. Usually encoded in the trnK tRNA gene intron. Probably assists in splicing its own and other chloroplast group II introns. In Paeonia cambessedesii (Majorcan peony), this protein is Maturase K.